A 1314-amino-acid chain; its full sequence is Tetratricopeptide repeat protein 21A (1314 aa).

19 TPR repeats span residues 110–143 (STAL…SSGS), 214–247 (LPAL…DENN), 326–359 (ALVA…EENR), 494–527 (MEPL…DPTF), 529–561 (DAHL…NFQV), 565–598 (PLYH…PTSK), 616–649 (ASIL…FSGT), 721–754 (PHSS…NPHD), 755–788 (ASLV…SGQD), 790–821 (LCCE…DSGV), 831–863 (VKCL…QSRI), 883–916 (ASIC…SPTD), 918–950 (KVVL…EQTH), 951–984 (ERAA…APDN), 986–1018 (LVLN…SSRV), 1022–1055 (PGFN…STWG), 1195–1228 (EKSW…NKSC), 1230–1262 (RAYE…SHQA), and 1264–1297 (PAIG…HPKY).

This sequence belongs to the TTC21 family. Interacts with IFT20. Interacts with IFT52. Interacts with IFT140. Interacts with CEP78; regulating IFT20 stability and localization.

Functionally, intraflagellar transport (IFT)-associated protein required for spermatogenesis. Required for sperm flagellar formation and intraflagellar transport. The polypeptide is Tetratricopeptide repeat protein 21A (Ttc21a) (Mus musculus (Mouse)).